Here is a 103-residue protein sequence, read N- to C-terminus: Large ribosomal subunit protein bL21 (103 aa).

The protein belongs to the bacterial ribosomal protein bL21 family. In terms of assembly, part of the 50S ribosomal subunit. Contacts protein L20.

In terms of biological role, this protein binds to 23S rRNA in the presence of protein L20. The protein is Large ribosomal subunit protein bL21 of Shewanella sp. (strain ANA-3).